The following is a 171-amino-acid chain: Large ribosomal subunit protein uL10 (171 aa).

Belongs to the universal ribosomal protein uL10 family. Part of the ribosomal stalk of the 50S ribosomal subunit. The N-terminus interacts with L11 and the large rRNA to form the base of the stalk. The C-terminus forms an elongated spine to which L12 dimers bind in a sequential fashion forming a multimeric L10(L12)X complex.

Functionally, forms part of the ribosomal stalk, playing a central role in the interaction of the ribosome with GTP-bound translation factors. The chain is Large ribosomal subunit protein uL10 from Corynebacterium jeikeium (strain K411).